Consider the following 227-residue polypeptide: Cytochrome c oxidase subunit 2 (227 aa).

The Mitochondrial intermembrane segment spans residues 1-14 (MAYPFQLGFQDATS). The helical transmembrane segment at 15–45 (PIMEELLHFHDHTLMIVFLISSLVLYIISSM) threads the bilayer. Residues 46–59 (LTTKLTHTSTMDAQ) lie on the Mitochondrial matrix side of the membrane. A helical membrane pass occupies residues 60 to 87 (EVETIWTILPAIILILIALPSLRILYMM). The Mitochondrial intermembrane segment spans residues 88–227 (DEINNPSLTV…YFEEWSASML (140 aa)). Histidine 161, cysteine 196, glutamate 198, cysteine 200, histidine 204, and methionine 207 together coordinate Cu cation. Glutamate 198 contacts Mg(2+).

The protein belongs to the cytochrome c oxidase subunit 2 family. Component of the cytochrome c oxidase (complex IV, CIV), a multisubunit enzyme composed of 14 subunits. The complex is composed of a catalytic core of 3 subunits MT-CO1, MT-CO2 and MT-CO3, encoded in the mitochondrial DNA, and 11 supernumerary subunits COX4I, COX5A, COX5B, COX6A, COX6B, COX6C, COX7A, COX7B, COX7C, COX8 and NDUFA4, which are encoded in the nuclear genome. The complex exists as a monomer or a dimer and forms supercomplexes (SCs) in the inner mitochondrial membrane with NADH-ubiquinone oxidoreductase (complex I, CI) and ubiquinol-cytochrome c oxidoreductase (cytochrome b-c1 complex, complex III, CIII), resulting in different assemblies (supercomplex SCI(1)III(2)IV(1) and megacomplex MCI(2)III(2)IV(2)). Found in a complex with TMEM177, COA6, COX18, COX20, SCO1 and SCO2. Interacts with TMEM177 in a COX20-dependent manner. Interacts with COX20. Interacts with COX16. Cu cation serves as cofactor.

Its subcellular location is the mitochondrion inner membrane. It catalyses the reaction 4 Fe(II)-[cytochrome c] + O2 + 8 H(+)(in) = 4 Fe(III)-[cytochrome c] + 2 H2O + 4 H(+)(out). Functionally, component of the cytochrome c oxidase, the last enzyme in the mitochondrial electron transport chain which drives oxidative phosphorylation. The respiratory chain contains 3 multisubunit complexes succinate dehydrogenase (complex II, CII), ubiquinol-cytochrome c oxidoreductase (cytochrome b-c1 complex, complex III, CIII) and cytochrome c oxidase (complex IV, CIV), that cooperate to transfer electrons derived from NADH and succinate to molecular oxygen, creating an electrochemical gradient over the inner membrane that drives transmembrane transport and the ATP synthase. Cytochrome c oxidase is the component of the respiratory chain that catalyzes the reduction of oxygen to water. Electrons originating from reduced cytochrome c in the intermembrane space (IMS) are transferred via the dinuclear copper A center (CU(A)) of subunit 2 and heme A of subunit 1 to the active site in subunit 1, a binuclear center (BNC) formed by heme A3 and copper B (CU(B)). The BNC reduces molecular oxygen to 2 water molecules using 4 electrons from cytochrome c in the IMS and 4 protons from the mitochondrial matrix. The protein is Cytochrome c oxidase subunit 2 (MT-CO2) of Equus asinus (Donkey).